Consider the following 198-residue polypeptide: Suppressor of cytokine signaling 2 (198 aa).

Residues 1-29 (MTLRCLEPSGNGGEGTRSQWGTAGSAEEP) form a disordered region. Residues 1 to 75 (MTLRCLEPSG…PEGTFLIRDS (75 aa)) form an interaction with AREL1 region. Position 30 is a phosphoserine (serine 30). Residues 48-156 (WYWGSMTVNE…TVHLYLTKPL (109 aa)) enclose the SH2 domain. Phosphoserine; by PKC is present on serine 52. The SOCS box domain occupies 151–197 (YLTKPLYTSAPSLQHLCRLTINKCTGAIWGLPLPTRLKDYLEEYKFQ). Lysine 173 is covalently cross-linked (Glycyl lysine isopeptide (Lys-Gly) (interchain with G-Cter in ubiquitin)).

As to quaternary structure, substrate-recognition component of the ECS(SOCS2) complex, composed of SOCS2, CUL5, ELOB, ELOC and RNF7/RBX2. Interacts with IGF1R. Interacts with DCUN1D1. In terms of processing, ubiquitinated; mediated by AREL1 and leading to its subsequent proteasomal degradation. Ubiquitination is dependent on its phosphorylation at Ser-52, by PKC. Ubiquitination is stimulated by LPS. Phosphorylation at Ser-52 by PKC facilitates its ubiquitination and proteasomal degradation. High expression in heart, placenta, lung, kidney and prostate. Predominantly expressed in pulmonary epithelia cells, specifically type II pneumocytes.

The protein localises to the cytoplasm. It functions in the pathway protein modification; protein ubiquitination. Substrate-binding is prevented by the covalent inhibitor MN551 that cross-links with Cys-111. Also inhibited by a MN551 derivative, MN714, which contains a pivaloyloxymethyl that allows cell permeability. In terms of biological role, substrate-recognition component of a cullin-5-RING E3 ubiquitin-protein ligase complex (ECS complex, also named CRL5 complex), which mediates the ubiquitination and subsequent proteasomal degradation of target proteins, such as EPOR and GHR. Specifically recognizes and binds phosphorylated proteins via its SH2 domain, promoting their ubiquitination. The ECS(SOCS2) complex acts as a key regulator of growth hormone receptor (GHR) levels by mediating ubiquitination and degradation of GHR, following GHR phosphorylation by JAK2. The ECS(SOCS2) also catalyzes ubiquitination and degradation of JAK2-phosphorylated EPOR. This is Suppressor of cytokine signaling 2 from Homo sapiens (Human).